The chain runs to 399 residues: Integral membrane protein GPR137B (399 aa).

The disordered stretch occupies residues 1 to 22; that stretch reads MRPERPRPRGSAPGPMETPPWD. Residues 1 to 46 are Lumenal-facing; the sequence is MRPERPRPRGSAPGPMETPPWDPARNDSLPPTLTPAVPPYVKLGLT. N-linked (GlcNAc...) asparagine glycosylation occurs at Asn-26. Residues 47–67 form a helical membrane-spanning segment; that stretch reads VVYTVFYALLFVFIYVQLWLV. The Cytoplasmic segment spans residues 68-79; the sequence is LRYRHKRLSYQS. A helical membrane pass occupies residues 80-100; it reads VFLFLCLFWASLRTVLFSFYF. The Lumenal portion of the chain corresponds to 101–111; sequence KDFVAANSLSP. A helical transmembrane segment spans residues 112–132; sequence FVFWLLYCFPVCLQFFTLTLM. The Cytoplasmic portion of the chain corresponds to 133-159; it reads NLYFTQVIFKAKSKYSPELLKYRLPLY. The helical transmembrane segment at 160–180 threads the bilayer; the sequence is LASLFISLVFLLVNLTCAVLV. The Lumenal portion of the chain corresponds to 181 to 188; that stretch reads KTGNWERK. A helical membrane pass occupies residues 189 to 209; sequence VIVSVRVAINDTLFVLCAVSL. The Cytoplasmic portion of the chain corresponds to 210 to 237; sequence SICLYKISKMSLANIYLESKGSSVCQVT. The helical transmembrane segment at 238–258 threads the bilayer; it reads AIGVTVILLYTSRACYNLFIL. At 259–292 the chain is on the lumenal side; it reads SFSQNKSVHSFDYDWYNVSDQADLKNQLGDAGYV. 2 N-linked (GlcNAc...) asparagine glycosylation sites follow: Asn-263 and Asn-275. The chain crosses the membrane as a helical span at residues 293-313; the sequence is LFGVVLFVWELLPTTLVVYFF. Residues 314 to 399 are Cytoplasmic-facing; the sequence is RVRNPTKDLT…TLDPDKPSLG (86 aa).

This sequence belongs to the GPR137 family. Interaction with RRAGA; increases RRAGA recruitment to lysosomes. Interacts with MTOR; this interaction is amino acid sensitive. In terms of tissue distribution, expressed in kidney, heart, brain and placenta.

The protein resides in the lysosome membrane. Functionally, lysosomal integral membrane protein that regulates the localization and activity of mTORC1, a signaling complex promoting cell growth in response to growth factors, energy levels, and amino acids. Interacts with Rag GTPases and increases the lysosomial localization and activity of Rag GTPases and thereby regulates mTORC1 translocation and activity in lysosome. Involved in the regulation of lysosomal morphology and autophagy. In terms of biological role, also acts as a negative regulator of osteoclast activity. Involved in interleukin-4-induced M2 macrophage polarization. This is Integral membrane protein GPR137B (GPR137B) from Homo sapiens (Human).